The sequence spans 208 residues: Thymidylate kinase (208 aa).

10 to 17 (GPEGSGKT) contacts ATP.

The protein belongs to the thymidylate kinase family.

It carries out the reaction dTMP + ATP = dTDP + ADP. Its function is as follows. Phosphorylation of dTMP to form dTDP in both de novo and salvage pathways of dTTP synthesis. This chain is Thymidylate kinase, found in Bacillus cereus (strain 03BB102).